Consider the following 490-residue polypeptide: Proline--tRNA ligase (490 aa).

It belongs to the class-II aminoacyl-tRNA synthetase family. ProS type 3 subfamily. In terms of assembly, homodimer.

The protein localises to the cytoplasm. It catalyses the reaction tRNA(Pro) + L-proline + ATP = L-prolyl-tRNA(Pro) + AMP + diphosphate. In terms of biological role, catalyzes the attachment of proline to tRNA(Pro) in a two-step reaction: proline is first activated by ATP to form Pro-AMP and then transferred to the acceptor end of tRNA(Pro). This Salinibacter ruber (strain DSM 13855 / M31) protein is Proline--tRNA ligase.